The sequence spans 329 residues: Glyceraldehyde-3-phosphate dehydrogenase 1 (329 aa).

NAD(+) is bound by residues 11–12 (RI), aspartate 33, and glutamate 77. Serine 148 is subject to Phosphoserine. 148–150 (SCT) contacts D-glyceraldehyde 3-phosphate. Cysteine 149 (nucleophile) is an active-site residue. Position 177 is a phosphoserine (serine 177). Threonine 179 contacts D-glyceraldehyde 3-phosphate. A Phosphoserine modification is found at serine 200. Residues 208–209 (TG) and arginine 231 each bind D-glyceraldehyde 3-phosphate. NAD(+) is bound at residue asparagine 313.

It belongs to the glyceraldehyde-3-phosphate dehydrogenase family. In terms of assembly, homotetramer.

It is found in the cytoplasm. It catalyses the reaction D-glyceraldehyde 3-phosphate + phosphate + NAD(+) = (2R)-3-phospho-glyceroyl phosphate + NADH + H(+). It participates in carbohydrate degradation; glycolysis; pyruvate from D-glyceraldehyde 3-phosphate: step 1/5. The sequence is that of Glyceraldehyde-3-phosphate dehydrogenase 1 from Kluyveromyces marxianus (Yeast).